Consider the following 523-residue polypeptide: 2-isopropylmalate synthase (523 aa).

Residues 5–267 (VIIFDTTLRD…ETGINAKEIH (263 aa)) enclose the Pyruvate carboxyltransferase domain. Mn(2+) contacts are provided by D14, H202, H204, and N238. The interval 392 to 523 (QLKQLVVHSD…QQKARSLGGV (132 aa)) is regulatory domain.

It belongs to the alpha-IPM synthase/homocitrate synthase family. LeuA type 1 subfamily. In terms of assembly, homodimer. It depends on Mn(2+) as a cofactor.

The protein localises to the cytoplasm. The catalysed reaction is 3-methyl-2-oxobutanoate + acetyl-CoA + H2O = (2S)-2-isopropylmalate + CoA + H(+). It participates in amino-acid biosynthesis; L-leucine biosynthesis; L-leucine from 3-methyl-2-oxobutanoate: step 1/4. Catalyzes the condensation of the acetyl group of acetyl-CoA with 3-methyl-2-oxobutanoate (2-ketoisovalerate) to form 3-carboxy-3-hydroxy-4-methylpentanoate (2-isopropylmalate). In Shewanella woodyi (strain ATCC 51908 / MS32), this protein is 2-isopropylmalate synthase.